A 211-amino-acid chain; its full sequence is Endo-1,4-beta-xylanase 3 (211 aa).

A signal peptide spans 1 to 27; it reads MKVTAAFAGLLVTAFAAPVPEPVLVSR. Residues 28 to 210 form the GH11 domain; that stretch reads SAGINYVQNY…GAGSASVTIS (183 aa). Glutamate 106 serves as the catalytic Nucleophile. Cysteine 119 and cysteine 138 are joined by a disulfide. Glutamate 197 acts as the Proton donor in catalysis.

The protein belongs to the glycosyl hydrolase 11 (cellulase G) family.

The protein localises to the secreted. The enzyme catalyses Endohydrolysis of (1-&gt;4)-beta-D-xylosidic linkages in xylans.. Its pathway is glycan degradation; xylan degradation. In Aspergillus kawachii (strain NBRC 4308) (White koji mold), this protein is Endo-1,4-beta-xylanase 3 (xynC).